The chain runs to 359 residues: GATA-binding factor 1-A (359 aa).

The disordered stretch occupies residues 1–21; the sequence is MDYTTLTTQDPDPNYTESGLA. 2 consecutive GATA-type zinc fingers follow at residues 178–202 and 232–256; these read CVNC…CNAC and CSNC…CNAC. Disordered regions lie at residues 271-311 and 323-359; these read MKKE…SPYP and PMGH…VTPP. Basic residues predominate over residues 279 to 291; the sequence is RNRKVSSRSKKKK.

Expressed in the developing ventral blood island, and in both tadpole and adult erythrocytes.

The protein resides in the nucleus. Transcription factor that acts synergistically with tal1/scl and lmo2 to specify embryonic dorsal mesoderm to a hematopoietic fate. The sequence is that of GATA-binding factor 1-A (gata1-a) from Xenopus laevis (African clawed frog).